The following is a 292-amino-acid chain: mRNA export protein 33 (292 aa).

Residues 1-76 (MPPKKAAKGK…RKRREEEKRA (76 aa)) are disordered. Composition is skewed to basic and acidic residues over residues 9–26 (GKGDPGKAAKKDPTKKAA) and 58–76 (KDAKRQEALRKRREEEKRA). Residues 134 to 172 (INTDIVCKFFLEACETGKYGWLWQCPNGNMTCIYKHALP) form a C3H1-type zinc finger.

It localises to the cytoplasm. In terms of biological role, functions as a component of the nuclear pore complex (NPC). NPC components, collectively referred to as nucleoporins (NUPs), can play the role of both NPC structural components and of docking or interaction partners for transiently associated nuclear transport factors. Active directional transport is assured by both, a Phe-Gly (FG) repeat affinity gradient for these transport factors across the NPC and a transport cofactor concentration gradient across the nuclear envelope. Involved in the export of mRNA from the nucleus to the cytoplasm. May play a role in mitotic spindle formation and/or function. In Schizosaccharomyces pombe (strain 972 / ATCC 24843) (Fission yeast), this protein is mRNA export protein 33 (mep33).